Here is a 416-residue protein sequence, read N- to C-terminus: Pectin acetylesterase 10 (416 aa).

An N-terminal signal peptide occupies residues 1–20 (MRKLFLLGFIVAGLVLGNEA). A glycan (N-linked (GlcNAc...) asparagine) is linked at asparagine 27. Catalysis depends on charge relay system residues serine 198, aspartate 294, and histidine 361.

This sequence belongs to the pectinacetylesterase family.

It localises to the secreted. The protein localises to the cell wall. In terms of biological role, hydrolyzes acetyl esters in homogalacturonan regions of pectin. In type I primary cell wall, galacturonic acid residues of pectin can be acetylated at the O-2 and O-3 positions. Decreasing the degree of acetylation of pectin gels in vitro alters their physical properties. In Arabidopsis thaliana (Mouse-ear cress), this protein is Pectin acetylesterase 10.